The sequence spans 487 residues: Protein translocase subunit SecY (487 aa).

Over Met-1–Pro-20 the chain is Cytoplasmic. A helical membrane pass occupies residues Glu-21–Lys-47. Topologically, residues Leu-48–Val-59 are extracellular. Positions Phe-60–Leu-67 form an intramembrane region, helical. A discontinuously helical transmembrane segment spans residues Phe-60 to Val-88. Residues Ala-68–Ile-79 lie within the membrane without spanning it. Positions Gly-80–Val-88 form an intramembrane region, helical. The Cytoplasmic segment spans residues Leu-89–Ile-110. Residues Leu-111–Gly-135 form a helical membrane-spanning segment. Residues Gly-136–Ala-153 are Extracellular-facing. Residues Gly-154 to Ser-178 form a helical membrane-spanning segment. Residues Lys-179–Ser-184 are Cytoplasmic-facing. A helical transmembrane segment spans residues Gly-185–Leu-203. Over Thr-204 to Gly-244 the chain is Extracellular. Residues Glu-245–Arg-266 form a helical membrane-spanning segment. The Cytoplasmic segment spans residues Val-267 to Ser-291. The chain crosses the membrane as a helical span at residues Val-292 to Asn-313. At Ala-314–Thr-364 the chain is on the extracellular side. A helical transmembrane segment spans residues Arg-365–Trp-384. Residues Val-385–Val-427 are Cytoplasmic-facing. A helical membrane pass occupies residues Thr-428 to Gly-446. The Extracellular segment spans residues Thr-447–Val-451. Residues Ser-452–Leu-466 form a helical membrane-spanning segment. Over Tyr-467 to Gly-487 the chain is Cytoplasmic.

This sequence belongs to the SecY/SEC61-alpha family. In terms of assembly, component of the Sec protein translocase complex. Heterotrimer consisting of alpha (SecY), beta (SecG) and gamma (SecE) subunits. The heterotrimers can form oligomers, although 1 heterotrimer is thought to be able to translocate proteins. Interacts with the ribosome. May interact with SecDF, and other proteins may be involved.

The protein resides in the cell membrane. In terms of biological role, the central subunit of the protein translocation channel SecYEG. Consists of two halves formed by TMs 1-5 and 6-10. These two domains form a lateral gate at the front which open onto the bilayer between TMs 2 and 7, and are clamped together by SecE at the back. The channel is closed by both a pore ring composed of hydrophobic SecY resides and a short helix (helix 2A) on the extracellular side of the membrane which forms a plug. The plug probably moves laterally to allow the channel to open. The ring and the pore may move independently. The polypeptide is Protein translocase subunit SecY (Haloarcula marismortui (strain ATCC 43049 / DSM 3752 / JCM 8966 / VKM B-1809) (Halobacterium marismortui)).